A 472-amino-acid chain; its full sequence is Trigger factor (472 aa).

Residues 174–261 form the PPIase FKBP-type domain; the sequence is GDIALVSFKG…LEDLKIKELP (88 aa). Residues 438-472 form a disordered region; that stretch reads EKTPEKARDQIKEKSSKKKTTKTNKEKKSSKTPKS. Basic and acidic residues predominate over residues 439 to 451; that stretch reads KTPEKARDQIKEK.

It belongs to the FKBP-type PPIase family. Tig subfamily.

The protein localises to the cytoplasm. It carries out the reaction [protein]-peptidylproline (omega=180) = [protein]-peptidylproline (omega=0). Functionally, involved in protein export. Acts as a chaperone by maintaining the newly synthesized protein in an open conformation. Functions as a peptidyl-prolyl cis-trans isomerase. The chain is Trigger factor from Prochlorococcus marinus (strain NATL2A).